We begin with the raw amino-acid sequence, 212 residues long: Ras-related protein Rab-2A (212 aa).

At Ala2 the chain carries N-acetylalanine. The tract at residues 2–19 is required for interaction with PRKCI; it reads AYAYLFKYIIIGDTGVGK. Residues Gly16, Val17, Gly18, Lys19, Ser20, Cys21, and Thr38 each coordinate GTP. Ser20 is a binding site for Mg(2+). The Switch 1 motif lies at 37-42; the sequence is LTMGVE. The Mg(2+) site is built by Thr38 and Asp61. Residues 63 to 72 carry the Switch 2 motif; sequence AGQESFRSIT. Residues Gly64, Asn119, Lys120, Asp122, Ala150, and Lys151 each coordinate GTP. The tract at residues 190–212 is disordered; the sequence is QHAATNASHGGNQGGQQAGGGCC. Gly residues predominate over residues 200-212; sequence GNQGGQQAGGGCC. Residues Cys211 and Cys212 are each lipidated (S-geranylgeranyl cysteine).

This sequence belongs to the small GTPase superfamily. Rab family. In terms of assembly, interacts with PRKCI. Interacts with TRIP11. Interacts (in GTP-bound form) with GARIN1B. Interacts (GTP-bound) with HOPS complex component VPS39; interaction contributes to obtaining a functional HOPS complex that promotes autophagosome-lysosome membrane fusion driven by STX17-SNAP29-VAMP8. May interact with VPS41. Mg(2+) is required as a cofactor. In terms of processing, prenylated. Prenylation is required for association with cellular membranes.

It is found in the endoplasmic reticulum-Golgi intermediate compartment membrane. It localises to the melanosome. The protein localises to the endoplasmic reticulum membrane. Its subcellular location is the golgi apparatus membrane. The protein resides in the cytoplasmic vesicle. It is found in the secretory vesicle. It localises to the acrosome. The protein localises to the autophagosome membrane. It catalyses the reaction GTP + H2O = GDP + phosphate + H(+). With respect to regulation, regulated by guanine nucleotide exchange factors (GEFs) which promote the exchange of bound GDP for free GTP, GTPase activating proteins (GAPs) which increase the GTP hydrolysis activity, and GDP dissociation inhibitors (GDIs) which inhibit the dissociation of the nucleotide from the GTPase. The small GTPases Rab are key regulators of intracellular membrane trafficking, from the formation of transport vesicles to their fusion with membranes. Rabs cycle between active GTP-bound and inactive GDP-bound states. In their active state, drive transport of vesicular carriers from donor organelles to acceptor organelles to regulate the membrane traffic that maintains organelle identity and morphology. RAB2A regulates autophagy by promoting autophagosome-lysosome fusion via recruitment of the HOPS endosomal tethering complex; this process involves autophagosomal RAB2A and lysosomal RAB39A recruitment of HOPS subcomplexes VPS39-VPS11 and VPS41-VPS16-VPS18-VPS33A, respectively, which assemble into a functional complex to mediate membrane tethering and SNAREs-driven membrane fusion. Required for protein transport from the endoplasmic reticulum to the Golgi complex. Regulates the compacted morphology of the Golgi. Together with RAB2B, redundantly required for efficient autophagic flux. This chain is Ras-related protein Rab-2A (Rab2a), found in Rattus norvegicus (Rat).